Consider the following 95-residue polypeptide: Large ribosomal subunit protein bL28 (95 aa).

The protein belongs to the bacterial ribosomal protein bL28 family.

This is Large ribosomal subunit protein bL28 from Orientia tsutsugamushi (strain Ikeda) (Rickettsia tsutsugamushi).